We begin with the raw amino-acid sequence, 361 residues long: tRNA-specific 2-thiouridylase MnmA (361 aa).

ATP contacts are provided by residues 11-18 (GMSGGVDS) and Met37. Cys106 functions as the Nucleophile in the catalytic mechanism. Residues Cys106 and Cys202 are joined by a disulfide bond. Gly130 contributes to the ATP binding site. Residues 152–154 (KDQ) are interaction with tRNA. Cys202 serves as the catalytic Cysteine persulfide intermediate. The tract at residues 308 to 309 (RY) is interaction with tRNA.

The protein belongs to the MnmA/TRMU family.

It localises to the cytoplasm. It carries out the reaction S-sulfanyl-L-cysteinyl-[protein] + uridine(34) in tRNA + AH2 + ATP = 2-thiouridine(34) in tRNA + L-cysteinyl-[protein] + A + AMP + diphosphate + H(+). In terms of biological role, catalyzes the 2-thiolation of uridine at the wobble position (U34) of tRNA, leading to the formation of s(2)U34. This Clostridium botulinum (strain Alaska E43 / Type E3) protein is tRNA-specific 2-thiouridylase MnmA.